Here is a 65-residue protein sequence, read N- to C-terminus: MLTLKKSMLLLFFLGMVSFSLADDKREDEAEEGEDKRADEGEEKRAAEKKRFLEGLLNTVTGLLG.

An N-terminal signal peptide occupies residues 1 to 22; that stretch reads MLTLKKSMLLLFFLGMVSFSLA. Positions 23-51 are excised as a propeptide; sequence DDKREDEAEEGEDKRADEGEEKRAAEKKR. The tract at residues 24–45 is disordered; the sequence is DKREDEAEEGEDKRADEGEEKR. Position 64 is a leucine amide (L64).

Belongs to the frog skin active peptide (FSAP) family. Brevinin subfamily. Expressed by the skin glands.

Its subcellular location is the secreted. Functionally, induces contraction of smooth muscle in isolated guinea pig urinary bladder (EC50=4.66 nM). Has no antimicrobial activity against the Gram-positive bacterium S.aureus, the Gram-negative bacterium E.coli and the yeast C.albicans. Elicits histamine release from rat peritoneal mast cells. In Phlyctimantis maculatus (Red-legged running frog), this protein is Kassorin-M.